The primary structure comprises 139 residues: Sec-independent protein translocase protein TatB (139 aa).

Residues 1-21 (MFDIGFTELLLVGLVALMVLG) form a helical membrane-spanning segment. The tract at residues 69–139 (LDLEREMKQS…PLRSDRPSEP (71 aa)) is disordered. The segment covering 80-95 (MPPPASNPAATPPSPP) has biased composition (pro residues).

Belongs to the TatB family. As to quaternary structure, the Tat system comprises two distinct complexes: a TatABC complex, containing multiple copies of TatA, TatB and TatC subunits, and a separate TatA complex, containing only TatA subunits. Substrates initially bind to the TatABC complex, which probably triggers association of the separate TatA complex to form the active translocon.

It localises to the cell inner membrane. Functionally, part of the twin-arginine translocation (Tat) system that transports large folded proteins containing a characteristic twin-arginine motif in their signal peptide across membranes. Together with TatC, TatB is part of a receptor directly interacting with Tat signal peptides. TatB may form an oligomeric binding site that transiently accommodates folded Tat precursor proteins before their translocation. The sequence is that of Sec-independent protein translocase protein TatB from Stutzerimonas stutzeri (strain A1501) (Pseudomonas stutzeri).